The sequence spans 366 residues: Protein sigma-NS (366 aa).

The important for ssRNA-binding and formation of complexes stretch occupies residues 1-11 (MASSLRAAISK).

Belongs to the orthoreovirus sigma-NS protein family. As to quaternary structure, homooligomer; in presence of RNA. Interacts with protein mu-NS; this interaction allows the localization of sigma-NS to the viral factories. Interacts with host G3BP1 (via C-terminus); this interaction induces the relocalization of G3BP1 and other SG proteins to the viral factories periphery.

Its subcellular location is the host cytoplasm. In terms of biological role, protein that binds to ssRNA and participates with protein mu-NS in forming the matrix of viral factories, which are large inclusions in the host cytoplasm where replication intermediates are assembled and viral RNA replication takes place. Plays a role in the inhibition of the integrated stress response (ISR) to escape from host cell translational shutoff. Participates in the disruption of stress granules (SG) through its association with host G3BP1 and mu-NS. This Mammalia (T3D) protein is Protein sigma-NS (S3).